Reading from the N-terminus, the 205-residue chain is Colicin-E8 (205 aa).

Disordered regions lie at residues 24-109 and 136-187; these read AQTD…PDRI and PELS…VYDM. 3 stretches are compositionally biased toward basic and acidic residues: residues 53–76, 88–99, and 159–178; these read QERR…ESKR, PVGDKWLDDAGK, and RNKD…DKPI. The Zn(2+) site is built by histidine 173, histidine 198, and histidine 202.

The protein belongs to the colicin/pyosin nuclease family.

In terms of biological role, this plasmid-coded bactericidal protein is an endonuclease active on both single- and double-stranded DNA but with undefined specificity. Functionally, colicins are polypeptide toxins produced by and active against E.coli and closely related bacteria. This Escherichia coli protein is Colicin-E8 (col).